The primary structure comprises 851 residues: Nucleolar RNA helicase 2 (851 aa).

The interval 1–260 (MPGKLRSGAK…IPVEQKEGAF (260 aa)) is disordered. Residues serine 7 and serine 13 each carry the phosphoserine modification. Composition is skewed to basic and acidic residues over residues 26 to 42 (PSEKKTRKEKTKSKTEE) and 99 to 113 (EPLEKQADSETKEII). Lysine 39 bears the N6-acetyllysine mark. A run of 3 repeats spans residues 117 to 153 (PSEEEADMPKPKKMKKGKEANGDAGEKSPKLKNGLSQ), 154 to 190 (PSEEEADIPKPKKMKKGKEANGDAGEKSPKLKNGLSQ), and 191 to 227 (PSEEEVDIPKPKKMKKGKEASGDAGEKSPRLKDGLSQ). The 3 X 37 AA tandem repeats stretch occupies residues 117-227 (PSEEEADMPK…SPRLKDGLSQ (111 aa)). A Phosphoserine modification is found at serine 118. The segment covering 133–145 (GKEANGDAGEKSP) has biased composition (basic and acidic residues). Lysine 134 carries the N6-acetyllysine modification. 9 positions are modified to phosphoserine: serine 144, serine 155, serine 181, serine 192, serine 218, serine 236, serine 243, serine 244, and serine 245. A compositionally biased stretch (basic and acidic residues) spans 170-182 (GKEANGDAGEKSP). A compositionally biased stretch (basic and acidic residues) spans 207-223 (GKEASGDAGEKSPRLKD). Residues 226–237 (SQPSEPKSNSSD) show a composition bias toward polar residues. Over residues 246–257 (ETEKEIPVEQKE) the composition is skewed to basic and acidic residues. Positions 258–286 (GAFSNFPISEETVKLLKARGVNFLFPIQA) match the Q motif motif. In terms of domain architecture, Helicase ATP-binding spans 289–468 (FHHVYSGKDL…KKYMKSTYEQ (180 aa)). 302–309 (ARTGTGKT) lines the ATP pocket. A Phosphothreonine modification is found at threonine 368. Residues 411–414 (DEVD) carry the DEAD box motif. In terms of domain architecture, Helicase C-terminal spans 501–645 (DVIRVYSGHQ…GVPSATEIIK (145 aa)). Serine 639 carries the phosphoserine modification. Lysine 672 is modified (N6-acetyllysine). Positions 783–851 (QPELEGPPDG…KRSFSKAFGQ (69 aa)) are disordered. 3 tandem repeats follow at residues 807–811 (FRGQR), 817–823 (FRGQGQR), and 829–833 (FRGQR). The tract at residues 807-833 (FRGQRGGSRNFRGQGQRGGSRNFRGQR) is 3 X 5 AA repeats. Lysine 847 is modified (N6-acetyllysine).

The protein belongs to the DEAD box helicase family. DDX21/DDX50 subfamily. As to quaternary structure, homodimer; homodimerizes via its N-terminus. Found in a multi-helicase-TICAM1 complex at least composed of DHX36, DDX1, DDX21 and TICAM1; this complex exists in resting cells with or without poly(I:C) RNA ligand stimulation. Interacts (via C-terminus) with TICAM1 (via TIR domain). Interacts with DHX36 (via C-terminus); this interaction serves as bridges to TICAM1. Interacts (via C-terminus) with DDX1 (via B30.2/SPRY domain); this interaction serves as bridges to TICAM1. Component of the B-WICH complex, at least composed of SMARCA5/SNF2H, BAZ1B/WSTF, SF3B1, DEK, MYO1C, ERCC6, MYBBP1A and DDX21. Interacts with C1QBP. Interacts with JUN. Interacts with WDR46. Interacts with MCM3AP. Interacts with WDR43. Interacts with KPNA3. Interacts with GID4. Post-translationally, acetylation by CREBBP/CBP inhibits the helicase activity. Deacetylation by SIRT7 promotes the helicase activity and overcomes R-loop-mediated stalling of RNA polymerases. Highly expressed in liver and testis. Expressed at lower level in brain, lungs, and skeletal muscle.

The protein resides in the nucleus. It is found in the nucleolus. The protein localises to the nucleoplasm. Its subcellular location is the cytoplasm. It localises to the cytosol. The protein resides in the mitochondrion. It carries out the reaction ATP + H2O = ADP + phosphate + H(+). With respect to regulation, acetylation inhibits the helicase activity. In terms of biological role, RNA helicase that acts as a sensor of the transcriptional status of both RNA polymerase (Pol) I and II: promotes ribosomal RNA (rRNA) processing and transcription from polymerase II (Pol II). Binds various RNAs, such as rRNAs, snoRNAs, 7SK and, at lower extent, mRNAs. In the nucleolus, localizes to rDNA locus, where it directly binds rRNAs and snoRNAs, and promotes rRNA transcription, processing and modification. Required for rRNA 2'-O-methylation, possibly by promoting the recruitment of late-acting snoRNAs SNORD56 and SNORD58 with pre-ribosomal complexes. In the nucleoplasm, binds 7SK RNA and is recruited to the promoters of Pol II-transcribed genes: acts by facilitating the release of P-TEFb from inhibitory 7SK snRNP in a manner that is dependent on its helicase activity, thereby promoting transcription of its target genes. Functions as cofactor for JUN-activated transcription: required for phosphorylation of JUN at 'Ser-77'. Can unwind double-stranded RNA (helicase) and can fold or introduce a secondary structure to a single-stranded RNA (foldase). Together with SIRT7, required to prevent R-loop-associated DNA damage and transcription-associated genomic instability: deacetylation by SIRT7 activates the helicase activity, thereby overcoming R-loop-mediated stalling of RNA polymerases. Involved in rRNA processing. May bind to specific miRNA hairpins. Component of a multi-helicase-TICAM1 complex that acts as a cytoplasmic sensor of viral double-stranded RNA (dsRNA) and plays a role in the activation of a cascade of antiviral responses including the induction of pro-inflammatory cytokines via the adapter molecule TICAM1. The protein is Nucleolar RNA helicase 2 (Ddx21) of Mus musculus (Mouse).